Here is a 373-residue protein sequence, read N- to C-terminus: MHRGTQEGAMASRLLHRLRHALAGDGPGEAAASPEAEQFPESSELEDDDAEGLSSRLSGTLSFTSAEDDEDDEDEDDEEAGPDQLPLGDGTSGEDAERSPPPDGQWGSQLLARQLQDFWKKSRNTLAPQRLLFEVTSANVVKDPPSKYVLYTLAVIGPGPPDCQPAQISRRYSDFERLHRNLQRQFRGPMAAISFPRKRLRRNFTAETIARRSRAFEQFLGHLQAVPELRHAPDLQDFFVLPELRRAQSLTCTGLYREALALWANAWQLQAQLGTPSGPDRPLLTLAGLAVCHQELEDPGEARACCEKALQLLGDKSLHPLLAPFLEAHVRLSWRLGLDKRQSEARLQALQEAGLTPTPPPSLKELLIKEVLD.

The tract at residues 1–107 (MHRGTQEGAM…RSPPPDGQWG (107 aa)) is disordered. Low complexity predominate over residues 21 to 37 (ALAGDGPGEAAASPEAE). The span at 55-65 (SRLSGTLSFTS) shows a compositional bias: polar residues. Residues 66-81 (AEDDEDDEDEDDEEAG) show a composition bias toward acidic residues. A PX domain is found at 129–246 (QRLLFEVTSA…DFFVLPELRR (118 aa)). 4 residues coordinate a 1,2-diacyl-sn-glycero-3-phospho-(1D-myo-inositol-3-phosphate): Arg171, Ser173, Lys198, and Arg212.

Belongs to the sorting nexin family. In terms of assembly, monomer. Highly expressed in fetus liver, but only weakly expressed in brain, skeleton muscle, smooth muscle, and cardiac muscle, kidney, and adrenal gland.

Its subcellular location is the cytoplasmic vesicle membrane. The protein localises to the early endosome membrane. In terms of biological role, binds to membranes enriched in phosphatidylinositol 3-phosphate (PtdIns(P3)) and phosphatidylinositol 4,5-bisphosphate. May be involved in several stages of intracellular trafficking. The sequence is that of Sorting nexin-21 (SNX21) from Homo sapiens (Human).